Here is a 529-residue protein sequence, read N- to C-terminus: Arginine--tRNA ligase (529 aa).

The 'HIGH' region motif lies at 113-123 (ANPTGPLHIGH).

It belongs to the class-I aminoacyl-tRNA synthetase family. Monomer.

The protein resides in the cytoplasm. It catalyses the reaction tRNA(Arg) + L-arginine + ATP = L-arginyl-tRNA(Arg) + AMP + diphosphate. In Aliarcobacter butzleri (strain RM4018) (Arcobacter butzleri), this protein is Arginine--tRNA ligase.